Here is a 164-residue protein sequence, read N- to C-terminus: Photosystem II extrinsic protein V (164 aa).

Residues 1–27 (MNRISIYRIKVLAFLFAVSTYVYPASS) form the signal peptide. Heme c is bound by residues Cys64, Cys67, His68, and His119.

This sequence belongs to the cytochrome c family. PsbV subfamily. PSII is composed of 1 copy each of membrane proteins PsbA, PsbB, PsbC, PsbD, PsbE, PsbF, PsbH, PsbI, PsbJ, PsbK, PsbL, PsbM, PsbT, PsbY, PsbZ, Psb30/Ycf12, at least 3 peripheral proteins of the oxygen-evolving complex and a large number of cofactors. It forms dimeric complexes. The extrinsic subunits in red algae are PsbO (OEC33), PsbQ', cytochrome c-550 and PsbU. Heme c is required as a cofactor.

It localises to the plastid. The protein localises to the chloroplast thylakoid membrane. Functionally, one of the extrinsic, lumenal subunits of photosystem II (PSII). PSII is a light-driven water plastoquinone oxidoreductase, using light energy to abstract electrons from H(2)O, generating a proton gradient subsequently used for ATP formation. The extrinsic proteins stabilize the structure of photosystem II oxygen-evolving complex (OEC), the ion environment of oxygen evolution and protect the OEC against heat-induced inactivation. The protein is Photosystem II extrinsic protein V of Cyanidium caldarium (Red alga).